Consider the following 69-residue polypeptide: DNA gyrase inhibitor YacG (69 aa).

Cys14, Cys17, Cys33, and Cys37 together coordinate Zn(2+). The interval 46 to 69 (ADEEKSIPGAPDMSDSDGWSEDQY) is disordered. The span at 59–69 (SDSDGWSEDQY) shows a compositional bias: acidic residues.

It belongs to the DNA gyrase inhibitor YacG family. Interacts with GyrB. Zn(2+) serves as cofactor.

In terms of biological role, inhibits all the catalytic activities of DNA gyrase by preventing its interaction with DNA. Acts by binding directly to the C-terminal domain of GyrB, which probably disrupts DNA binding by the gyrase. In Aliivibrio fischeri (strain MJ11) (Vibrio fischeri), this protein is DNA gyrase inhibitor YacG.